A 121-amino-acid chain; its full sequence is Large ribosomal subunit protein uL24 (121 aa).

Positions 1–23 (MVRIESSQPRKQRKARYDAPSHM) are disordered.

It belongs to the universal ribosomal protein uL24 family. Part of the 50S ribosomal subunit.

Its function is as follows. One of two assembly initiator proteins, it binds directly to the 5'-end of the 23S rRNA, where it nucleates assembly of the 50S subunit. Functionally, located at the polypeptide exit tunnel on the outside of the subunit. This is Large ribosomal subunit protein uL24 from Methanoregula boonei (strain DSM 21154 / JCM 14090 / 6A8).